The chain runs to 152 residues: MDLSTLEQKLTEMISAPVAALGYELVGIEFIRSRQSTLRIYIDSEDGITVDDCADVSHQVSAVLDVEDPITVAYNLEVSSPGLERPLFTAAHYLHFVGEEVAVVLRMAVQNRRKWLGVIKAVDGEMITITVEGKDEVFALSNIQKANLVPHF.

Belongs to the RimP family.

It localises to the cytoplasm. Functionally, required for maturation of 30S ribosomal subunits. This is Ribosome maturation factor RimP from Pectobacterium atrosepticum (strain SCRI 1043 / ATCC BAA-672) (Erwinia carotovora subsp. atroseptica).